Consider the following 410-residue polypeptide: Peptidase T (410 aa).

Histidine 79 is a binding site for Zn(2+). Aspartate 81 is an active-site residue. Residue aspartate 142 coordinates Zn(2+). Glutamate 176 (proton acceptor) is an active-site residue. Zn(2+) contacts are provided by glutamate 177, aspartate 199, and histidine 381.

The protein belongs to the peptidase M20B family. It depends on Zn(2+) as a cofactor.

Its subcellular location is the cytoplasm. It catalyses the reaction Release of the N-terminal residue from a tripeptide.. In terms of biological role, cleaves the N-terminal amino acid of tripeptides. This Bacillus cereus (strain G9842) protein is Peptidase T.